A 345-amino-acid polypeptide reads, in one-letter code: NADH-quinone oxidoreductase subunit H (345 aa).

Transmembrane regions (helical) follow at residues 13 to 33, 84 to 104, 115 to 135, 161 to 181, 190 to 210, 248 to 268, 278 to 298, and 309 to 329; these read VLIIAQCLAVLGFVMVSLLFL, FMLAPMTSFVLAMIAWAVIPF, VAILYVFAVSSLEVYGVIMGG, IGLIIIGVILSTGSMNFSAIV, FFSWYWLPHLPMVFLFFISAL, YIAIFLMCALITLLFFGGWLS, IWMVGKMAFFFFLFAMVKAIV, and LGWKVFLPFSLAWVVFVAFAA.

The protein belongs to the complex I subunit 1 family. NDH-1 is composed of 14 different subunits. Subunits NuoA, H, J, K, L, M, N constitute the membrane sector of the complex.

It is found in the cell inner membrane. It carries out the reaction a quinone + NADH + 5 H(+)(in) = a quinol + NAD(+) + 4 H(+)(out). Its function is as follows. NDH-1 shuttles electrons from NADH, via FMN and iron-sulfur (Fe-S) centers, to quinones in the respiratory chain. The immediate electron acceptor for the enzyme in this species is believed to be ubiquinone. Couples the redox reaction to proton translocation (for every two electrons transferred, four hydrogen ions are translocated across the cytoplasmic membrane), and thus conserves the redox energy in a proton gradient. This subunit may bind ubiquinone. This chain is NADH-quinone oxidoreductase subunit H, found in Dinoroseobacter shibae (strain DSM 16493 / NCIMB 14021 / DFL 12).